The primary structure comprises 206 residues: uncharacterized protein (206 aa).

The tract at residues 147–206 (REEKAQKSKSKSRNQDERGSPLDERLGPKVSDLTLMERIFQVRRKPRKSRRDRRSRVSKR) is disordered. Residues 159-173 (RNQDERGSPLDERLG) are compositionally biased toward basic and acidic residues. A compositionally biased stretch (basic residues) spans 187-206 (QVRRKPRKSRRDRRSRVSKR).

This is an uncharacterized protein from Schizosaccharomyces pombe (strain 972 / ATCC 24843) (Fission yeast).